The primary structure comprises 66 residues: UPF0434 protein Mnod_1613 (66 aa).

The protein belongs to the UPF0434 family.

In Methylobacterium nodulans (strain LMG 21967 / CNCM I-2342 / ORS 2060), this protein is UPF0434 protein Mnod_1613.